The sequence spans 44 residues: Pandinin-1 (44 aa).

In terms of tissue distribution, expressed by the venom gland.

The protein resides in the secreted. It is found in the target cell membrane. In terms of biological role, disrupts cell membranes through formation of pores. Strong antimicrobial activity against Gram-positive bacteria B.subtilis, S.epidermidis, E.faecalis and S.aureus. Less active against Gram-negative bacteria P.aeruginosa and E.coli. Has no antifungal or hemolytic activity. This Pandinus imperator (Emperor scorpion) protein is Pandinin-1.